Here is a 252-residue protein sequence, read N- to C-terminus: 3-dehydroquinate dehydratase (252 aa).

Residues Ser-21, 46–48 (EWR), and Arg-82 contribute to the 3-dehydroquinate site. Residue His-143 is the Proton donor/acceptor of the active site. The Schiff-base intermediate with substrate role is filled by Lys-170. Arg-213, Ser-232, and Gln-236 together coordinate 3-dehydroquinate.

It belongs to the type-I 3-dehydroquinase family. Homodimer.

The enzyme catalyses 3-dehydroquinate = 3-dehydroshikimate + H2O. Its pathway is metabolic intermediate biosynthesis; chorismate biosynthesis; chorismate from D-erythrose 4-phosphate and phosphoenolpyruvate: step 3/7. Functionally, involved in the third step of the chorismate pathway, which leads to the biosynthesis of aromatic amino acids. Catalyzes the cis-dehydration of 3-dehydroquinate (DHQ) and introduces the first double bond of the aromatic ring to yield 3-dehydroshikimate. In Escherichia coli O7:K1 (strain IAI39 / ExPEC), this protein is 3-dehydroquinate dehydratase.